Reading from the N-terminus, the 272-residue chain is Undecaprenyl-diphosphatase (272 aa).

7 consecutive transmembrane segments (helical) span residues 6-26 (SLLI…LPVS), 45-65 (AKTF…VMFW), 92-112 (THIL…HDVI), 115-135 (LFYP…LLAA), 189-209 (YAAS…ATVL), 221-241 (ADVP…LIAI), and 251-271 (ISFI…YMVF).

The protein belongs to the UppP family.

The protein localises to the cell inner membrane. The catalysed reaction is di-trans,octa-cis-undecaprenyl diphosphate + H2O = di-trans,octa-cis-undecaprenyl phosphate + phosphate + H(+). Functionally, catalyzes the dephosphorylation of undecaprenyl diphosphate (UPP). Confers resistance to bacitracin. The polypeptide is Undecaprenyl-diphosphatase (Pectobacterium atrosepticum (strain SCRI 1043 / ATCC BAA-672) (Erwinia carotovora subsp. atroseptica)).